Reading from the N-terminus, the 89-residue chain is MVCKRWILYGRVQGVGLRHFLRVHGVRLQLEGYVRNLPDGSVEVVAQGEKEKVLKLKTIILQGNGFSRLEDVQEEDFPIGNYGSFHIEY.

One can recognise an Acylphosphatase-like domain in the interval 3 to 89; the sequence is CKRWILYGRV…GNYGSFHIEY (87 aa). Active-site residues include Arg-18 and Asn-36.

Belongs to the acylphosphatase family.

The enzyme catalyses an acyl phosphate + H2O = a carboxylate + phosphate + H(+). This is Acylphosphatase (acyP) from Petrotoga mobilis (strain DSM 10674 / SJ95).